A 115-amino-acid chain; its full sequence is Large ribosomal subunit protein bL19 (115 aa).

It belongs to the bacterial ribosomal protein bL19 family.

This protein is located at the 30S-50S ribosomal subunit interface and may play a role in the structure and function of the aminoacyl-tRNA binding site. This Francisella tularensis subsp. holarctica (strain FTNF002-00 / FTA) protein is Large ribosomal subunit protein bL19.